We begin with the raw amino-acid sequence, 776 residues long: Serine/threonine-protein kinase-like protein CCR2 (776 aa).

The first 22 residues, 1–22 (MQPNSHIFVIITISSLIITVSA), serve as a signal peptide directing secretion. Topologically, residues 23 to 432 (YGSTGTIAAA…QKEQREVRRL (410 aa)) are extracellular. Residues Asn-59, Asn-92, Asn-154, Asn-162, Asn-205, Asn-278, Asn-287, and Asn-350 are each glycosylated (N-linked (GlcNAc...) asparagine). Residues 341–396 (NCGDGWFAFNASILKESELTSLCSFHNLNICLRCGISCLEGYFPSSTCNPNADRVC) form a TNFR-Cys repeat. Cystine bridges form between Cys-342–Cys-371, Cys-374–Cys-388, and Cys-378–Cys-396. A glycan (N-linked (GlcNAc...) asparagine) is linked at Asn-404. A helical transmembrane segment spans residues 433–453 (VIIIGCSVLGFLVMLIGLSFI). At 454–776 (PKMTKGSKRD…DLIVKSGLTF (323 aa)) the chain is on the cytoplasmic side. Positions 519–776 (FKEFNELGRG…DLIVKSGLTF (258 aa)) constitute a Protein kinase domain. Residues 525 to 533 (LGRGSFGFV) and Lys-547 each bind ATP. Asp-644 acts as the Proton acceptor in catalysis.

This sequence belongs to the protein kinase superfamily. Ser/Thr protein kinase family. In terms of assembly, homodimer. In terms of tissue distribution, expressed in roots, leaves, shoot apical meristems (SAM), and floral buds.

The protein resides in the membrane. It catalyses the reaction L-seryl-[protein] + ATP = O-phospho-L-seryl-[protein] + ADP + H(+). It carries out the reaction L-threonyl-[protein] + ATP = O-phospho-L-threonyl-[protein] + ADP + H(+). In terms of biological role, serine/threonine-protein kinase with low activity. This chain is Serine/threonine-protein kinase-like protein CCR2 (CCR2), found in Arabidopsis thaliana (Mouse-ear cress).